Reading from the N-terminus, the 180-residue chain is Insertion element IS1296 uncharacterized 21.4 kDa protein (180 aa).

It belongs to the IS150/IS1296 orfA family.

The polypeptide is Insertion element IS1296 uncharacterized 21.4 kDa protein (Mycoplasma mycoides subsp. mycoides SC).